Consider the following 320-residue polypeptide: Cytochrome c biogenesis protein CcsA (320 aa).

A run of 8 helical transmembrane segments spans residues 9–29 (ILIH…FLTL), 44–64 (GMIV…IYSG), 71–91 (LYES…VCYF), 99–119 (LNAI…SGLL), 144–164 (MVLG…LLVI), 226–246 (IISL…VWAN), 261–281 (WAFI…NINL), and 287–307 (AIVA…VNLL).

The protein belongs to the CcmF/CycK/Ccl1/NrfE/CcsA family. May interact with Ccs1.

The protein localises to the plastid. Its subcellular location is the chloroplast thylakoid membrane. Its function is as follows. Required during biogenesis of c-type cytochromes (cytochrome c6 and cytochrome f) at the step of heme attachment. The chain is Cytochrome c biogenesis protein CcsA from Carica papaya (Papaya).